Consider the following 251-residue polypeptide: Aspartate/glutamate leucyltransferase (251 aa).

The protein belongs to the R-transferase family. Bpt subfamily.

Its subcellular location is the cytoplasm. It carries out the reaction N-terminal L-glutamyl-[protein] + L-leucyl-tRNA(Leu) = N-terminal L-leucyl-L-glutamyl-[protein] + tRNA(Leu) + H(+). The catalysed reaction is N-terminal L-aspartyl-[protein] + L-leucyl-tRNA(Leu) = N-terminal L-leucyl-L-aspartyl-[protein] + tRNA(Leu) + H(+). Functions in the N-end rule pathway of protein degradation where it conjugates Leu from its aminoacyl-tRNA to the N-termini of proteins containing an N-terminal aspartate or glutamate. This is Aspartate/glutamate leucyltransferase from Nitrosospira multiformis (strain ATCC 25196 / NCIMB 11849 / C 71).